We begin with the raw amino-acid sequence, 323 residues long: tRNA dimethylallyltransferase (323 aa).

18–25 (GPTASGKS) is an ATP binding site. A substrate-binding site is contributed by 20-25 (TASGKS). Interaction with substrate tRNA regions lie at residues 43-46 (DSAQ), 167-171 (QRIQR), and 249-254 (RCVGYR).

The protein belongs to the IPP transferase family. As to quaternary structure, monomer. The cofactor is Mg(2+).

The enzyme catalyses adenosine(37) in tRNA + dimethylallyl diphosphate = N(6)-dimethylallyladenosine(37) in tRNA + diphosphate. Catalyzes the transfer of a dimethylallyl group onto the adenine at position 37 in tRNAs that read codons beginning with uridine, leading to the formation of N6-(dimethylallyl)adenosine (i(6)A). The sequence is that of tRNA dimethylallyltransferase from Nitrosospira multiformis (strain ATCC 25196 / NCIMB 11849 / C 71).